The sequence spans 428 residues: C4-dicarboxylate transport protein (428 aa).

9 consecutive transmembrane segments (helical) span residues 7-27, 40-60, 75-95, 143-163, 196-216, 221-241, 306-326, 329-349, and 351-371; these read SLYF…IVAP, FIKL…VLGI, LALL…LLIV, AFAR…GIAL, PIGA…GSLF, LMAT…GAIA, IYLT…MTLG, FTLL…TGSG, and IVLA…LALI.

This sequence belongs to the dicarboxylate/amino acid:cation symporter (DAACS) (TC 2.A.23) family.

It is found in the cell inner membrane. In terms of biological role, responsible for the transport of dicarboxylates such as succinate, fumarate, and malate from the periplasm across the membrane. The sequence is that of C4-dicarboxylate transport protein from Solibacter usitatus (strain Ellin6076).